We begin with the raw amino-acid sequence, 326 residues long: Heterodimeric geranylgeranyl pyrophosphate synthase small subunit, chloroplastic (326 aa).

The N-terminal 33 residues, 1–33 (MLFSGSAIPLSSFCSLPEKPHTLPMKLSPAAIR), are a transit peptide targeting the chloroplast. Isopentenyl diphosphate-binding residues include Lys-88 and His-120. Residues Asp-127 and Asp-133 each contribute to the Mg(2+) site. Arg-138 contributes to the dimethylallyl diphosphate binding site. Arg-139 provides a ligand contact to isopentenyl diphosphate. The dimethylallyl diphosphate site is built by Lys-220 and Gln-258. The stretch at 274-301 (GAEKGMMEMAEELKEKAKKELQVFDNKY) forms a coiled coil.

This sequence belongs to the FPP/GGPP synthase family. As to quaternary structure, part of a heterodimeric geranyl(geranyl)diphosphate synthase. Interacts with GGPPS1 or GGPPS2, but not with GGPPS9. Interacts with LIL3.1 and LIL3.2. Mg(2+) serves as cofactor. In terms of tissue distribution, expressed ubiquitously.

The protein localises to the plastid. It is found in the chloroplast thylakoid membrane. Its function is as follows. Heterodimeric geranyl(geranyl)-diphosphate (GPP) synthase small subunit. The small subunit alone is inactive in vitro while the large subunit GGPPS1 catalyzes mainly the production of geranygeranyl-diphosphate in vitro. Upon association of the two subunits, the product profile changes and the production of gerany-diphosphate is strongly increased. The sequence is that of Heterodimeric geranylgeranyl pyrophosphate synthase small subunit, chloroplastic (GGR) from Arabidopsis thaliana (Mouse-ear cress).